Here is an 85-residue protein sequence, read N- to C-terminus: Cytochrome b (85 aa).

The next 3 helical transmembrane spans lie at 1–8 (LTGLFLAM), 32–53 (WLIRNIHANGASFFFICIYLHI), and 68–85 (WNVGVVLLLLVMMTAFVG). Positions 38 and 52 each coordinate heme b.

The protein belongs to the cytochrome b family. In terms of assembly, the cytochrome bc1 complex contains 3 respiratory subunits (MT-CYB, CYC1 and UQCRFS1), 2 core proteins (UQCRC1 and UQCRC2) and probably 6 low-molecular weight proteins. It depends on heme b as a cofactor.

The protein resides in the mitochondrion inner membrane. In terms of biological role, component of the ubiquinol-cytochrome c reductase complex (complex III or cytochrome b-c1 complex) that is part of the mitochondrial respiratory chain. The b-c1 complex mediates electron transfer from ubiquinol to cytochrome c. Contributes to the generation of a proton gradient across the mitochondrial membrane that is then used for ATP synthesis. The sequence is that of Cytochrome b (mt-cyb) from Pomoxis nigromaculatus (Black crappie).